The primary structure comprises 400 residues: Large envelope protein (400 aa).

N-acetylmethionine is present on methionine 1. 2 disordered regions span residues 1–54 (MGGW…HWPE) and 85–116 (LTTV…RDSH). The N-myristoyl glycine; by host moiety is linked to residue glycine 2. The interval 2–119 (GGWSSKPRQG…PPLRDSHPQA (118 aa)) is pre-S1. Residues 2-174 (GGWSSKPRQG…FSRTGDPAPN (173 aa)) form a pre-S region. Residues 2–181 (GGWSSKPRQG…APNMENTTSG (180 aa)) lie on the Virion surface; in external conformation side of the membrane. The Intravirion; in internal conformation segment spans residues 2 to 253 (GGWSSKPRQG…PGYRWMCLRR (252 aa)). Residue tryptophan 4 is glycosylated (N-linked (GlcNAc...) asparagine). The segment covering 96 to 106 (STNRQSGRQPT) has biased composition (polar residues). The segment at 120–174 (MQWNSTTFHQALLDPRVRGLYFPAGGSSSGTVNPVPTTASPISSIFSRTGDPAPN) is pre-S2. The helical transmembrane segment at 182–202 (FLGPLLVLQAGFFLLTRILTI) threads the bilayer. The Intravirion; in external conformation segment spans residues 203–253 (PQSLDSWWTSLNFLGGAPTCPGQNSQSPTSNHSPTSCPPICPGYRWMCLRR). The chain crosses the membrane as a helical span at residues 254-274 (FIIFLFILLLCLIFLLVLLDY). The Virion surface segment spans residues 275–348 (QGMLPVCPLL…WASVRFSWLS (74 aa)). The N-linked (GlcNAc...) asparagine; by host glycan is linked to asparagine 320. The helical transmembrane segment at 349-369 (LLVPFVQWFAGLSPTVWLSVI) threads the bilayer. The Intravirion portion of the chain corresponds to 370–375 (WMMWYW). A helical membrane pass occupies residues 376–398 (GPSLYNILSPFLPLLPIFFCLWV). The Virion surface portion of the chain corresponds to 399–400 (YI).

The protein belongs to the orthohepadnavirus major surface antigen family. As to quaternary structure, in its internal form (Li-HBsAg), interacts with the capsid protein and with the isoform S. Interacts with host chaperone CANX. Associates with host chaperone CANX through its pre-S2 N glycan; this association may be essential for isoform M proper secretion. In terms of assembly, interacts with isoform L. Interacts with the antigens of satellite virus HDV (HDVAgs); this interaction is required for encapsidation of HDV genomic RNA. In terms of processing, isoform M is N-terminally acetylated by host at a ratio of 90%, and N-glycosylated by host at the pre-S2 region. Post-translationally, myristoylated.

It is found in the virion membrane. Functionally, the large envelope protein exists in two topological conformations, one which is termed 'external' or Le-HBsAg and the other 'internal' or Li-HBsAg. In its external conformation the protein attaches the virus to cell receptors and thereby initiating infection. This interaction determines the species specificity and liver tropism. This attachment induces virion internalization predominantly through caveolin-mediated endocytosis. The large envelope protein also assures fusion between virion membrane and endosomal membrane. In its internal conformation the protein plays a role in virion morphogenesis and mediates the contact with the nucleocapsid like a matrix protein. Its function is as follows. The middle envelope protein plays an important role in the budding of the virion. It is involved in the induction of budding in a nucleocapsid independent way. In this process the majority of envelope proteins bud to form subviral lipoprotein particles of 22 nm of diameter that do not contain a nucleocapsid. This chain is Large envelope protein, found in Homo sapiens (Human).